The following is a 955-amino-acid chain: 2-oxoglutarate dehydrogenase E1 component (955 aa).

Belongs to the alpha-ketoglutarate dehydrogenase family. In terms of assembly, homodimer. Part of the 2-oxoglutarate dehydrogenase (OGDH) complex composed of E1 (2-oxoglutarate dehydrogenase), E2 (dihydrolipoamide succinyltransferase) and E3 (dihydrolipoamide dehydrogenase); the complex contains multiple copies of the three enzymatic components (E1, E2 and E3). Thiamine diphosphate serves as cofactor.

The catalysed reaction is N(6)-[(R)-lipoyl]-L-lysyl-[protein] + 2-oxoglutarate + H(+) = N(6)-[(R)-S(8)-succinyldihydrolipoyl]-L-lysyl-[protein] + CO2. In terms of biological role, E1 component of the 2-oxoglutarate dehydrogenase (OGDH) complex which catalyzes the decarboxylation of 2-oxoglutarate, the first step in the conversion of 2-oxoglutarate to succinyl-CoA and CO(2). The polypeptide is 2-oxoglutarate dehydrogenase E1 component (Bacillus cereus (strain ZK / E33L)).